A 64-amino-acid polypeptide reads, in one-letter code: MSSRQGGKMKPLKQKKKQQQDLDPEDIAFKEKQKADAAAKKALMANMKSGKPLVGGGIKKSGKK.

Disordered regions lie at residues 1–38 and 45–64; these read MSSRQGGKMKPLKQKKKQQQDLDPEDIAFKEKQKADAA and ANMKSGKPLVGGGIKKSGKK. Basic and acidic residues predominate over residues 27 to 38; it reads IAFKEKQKADAA. Gly residues predominate over residues 53-64; that stretch reads LVGGGIKKSGKK.

Belongs to the TMA7 family. Interacts with the 40S ribosomal subunit.

It localises to the cytoplasm. Its subcellular location is the nucleus. Functionally, involved in protein synthesis. The protein is Translation machinery-associated protein 7 (TMA7) of Saccharomyces cerevisiae (strain ATCC 204508 / S288c) (Baker's yeast).